A 107-amino-acid chain; its full sequence is Large ribosomal subunit protein uL24 (107 aa).

This sequence belongs to the universal ribosomal protein uL24 family. As to quaternary structure, part of the 50S ribosomal subunit.

Functionally, one of two assembly initiator proteins, it binds directly to the 5'-end of the 23S rRNA, where it nucleates assembly of the 50S subunit. In terms of biological role, one of the proteins that surrounds the polypeptide exit tunnel on the outside of the subunit. The protein is Large ribosomal subunit protein uL24 of Mycobacterium ulcerans (strain Agy99).